The following is a 479-amino-acid chain: Outer membrane protein OprJ (479 aa).

Positions 1–19 (MRKPAFGVSALLIALTLGA) are cleaved as a signal peptide. Cys-20 carries N-palmitoyl cysteine lipidation. Residue Cys-20 is the site of S-diacylglycerol cysteine attachment. A disordered region spans residues 102 to 121 (LNAAATGNRQRQPADLSAGN).

This sequence belongs to the outer membrane factor (OMF) (TC 1.B.17) family.

It localises to the cell outer membrane. In terms of biological role, channel-forming component of a multidrug resistance efflux pump. In Pseudomonas aeruginosa (strain ATCC 15692 / DSM 22644 / CIP 104116 / JCM 14847 / LMG 12228 / 1C / PRS 101 / PAO1), this protein is Outer membrane protein OprJ (oprJ).